The primary structure comprises 303 residues: 4-diphosphocytidyl-2-C-methyl-D-erythritol kinase (303 aa).

The active site involves Lys-21. 106-116 provides a ligand contact to ATP; that stretch reads PVAAGIGGGSA. Residue Asp-148 is part of the active site.

The protein belongs to the GHMP kinase family. IspE subfamily.

It carries out the reaction 4-CDP-2-C-methyl-D-erythritol + ATP = 4-CDP-2-C-methyl-D-erythritol 2-phosphate + ADP + H(+). It participates in isoprenoid biosynthesis; isopentenyl diphosphate biosynthesis via DXP pathway; isopentenyl diphosphate from 1-deoxy-D-xylulose 5-phosphate: step 3/6. In terms of biological role, catalyzes the phosphorylation of the position 2 hydroxy group of 4-diphosphocytidyl-2C-methyl-D-erythritol. This Nitrobacter hamburgensis (strain DSM 10229 / NCIMB 13809 / X14) protein is 4-diphosphocytidyl-2-C-methyl-D-erythritol kinase.